The following is a 169-amino-acid chain: Cell division inhibitor SulA (169 aa).

The tract at residues 106 to 112 (ALRTGNY) is ftsZ binding. The segment at 162 to 169 (KIHSNLYH) is lon protease binding.

Belongs to the SulA family. In terms of assembly, interacts with FtsZ. In terms of processing, is rapidly cleaved and degraded by the Lon protease once DNA damage is repaired.

Its function is as follows. Component of the SOS system and an inhibitor of cell division. Accumulation of SulA causes rapid cessation of cell division and the appearance of long, non-septate filaments. In the presence of GTP, binds a polymerization-competent form of FtsZ in a 1:1 ratio, thus inhibiting FtsZ polymerization and therefore preventing it from participating in the assembly of the Z ring. This mechanism prevents the premature segregation of damaged DNA to daughter cells during cell division. The polypeptide is Cell division inhibitor SulA (Escherichia coli O45:K1 (strain S88 / ExPEC)).